A 1481-amino-acid polypeptide reads, in one-letter code: Coiled-coil domain-containing protein 88B (1481 aa).

Coiled-coil stretches lie at residues 200–225 and 258–491; these read ELVA…RERD and SHHL…GSQH. 3 disordered regions span residues 430-458, 494-731, and 1331-1481; these read ELQR…QDEV, LEEQ…AIPE, and PRRE…SLSQ. S441 bears the Phosphoserine mark. 2 stretches are compositionally biased toward polar residues: residues 542-557 and 568-590; these read ASYS…SQAP and QMVS…TVET. Residue S649 is modified to Phosphoserine. Positions 660–695 are enriched in basic and acidic residues; that stretch reads TLREPLKDQKALDRELELSKQQKETGRHEQRPKGLE. Residues 731–1308 are a coiled coil; it reads EEQALRDEVA…KIMDQYRVLE (578 aa). Phosphoserine is present on residues S1353 and S1384. The span at 1371-1386 shows a compositional bias: polar residues; sequence TGSSSPAPMRRVQSSL. Over residues 1453–1472 the composition is skewed to basic and acidic residues; it reads LSEHEADDTREAFQEQKPEK.

It belongs to the CCDC88 family. As to quaternary structure, homodimer. Interacts with DOCK8. Interacts (via C-terminus) with intact microtubules. Interacts with dynein-dynactin motor complex. Interacts (via C-terminus) with HSPA5. Abundantly expressed in immune cells, including both CD4(+) and CD8(+) T-cells and in myeloid cells (at protein level). Expressed in endothelium (at protein level). Expressed specifically in spleen, bone marrow, lymph nodes and thymus. Expressed in liver and heart.

The protein resides in the membrane. The protein localises to the cytoplasm. Its subcellular location is the cytoskeleton. It is found in the microtubule organizing center. It localises to the endoplasmic reticulum. The protein resides in the golgi apparatus. Its function is as follows. Acts as a positive regulator of T-cell maturation and inflammatory function. Required for several functions of T-cells in both the CD4(+) and the CD8(+) compartments and this includes expression of cell surface markers of activation, proliferation, and cytokine production in response to specific or non-specific stimulation and during the course of infection with the mouse malaria parasite Plasmodium berghei. Enhances NK cell cytotoxicity by positively regulating polarization of microtubule-organizing center (MTOC) to cytotoxic synapse, lytic granule transport along microtubules, and dynein-mediated clustering to MTOC. Interacts with HSPA5 and stabilizes the interaction between HSPA5 and ERN1, leading to suppression of ERN1-induced JNK activation and endoplasmic reticulum stress-induced apoptosis. The polypeptide is Coiled-coil domain-containing protein 88B (Ccdc88b) (Mus musculus (Mouse)).